Reading from the N-terminus, the 694-residue chain is Envelope glycoprotein H (694 aa).

The N-terminal stretch at 1–16 (MLFRLWVFVLLTPCYS) is a signal peptide. Residues 17 to 671 (WRPWTISDES…GIDIDQVSII (655 aa)) are Virion surface-facing. N-linked (GlcNAc...) asparagine; by host glycans are attached at residues Asn-51, Asn-76, Asn-148, Asn-206, Asn-337, Asn-365, Asn-384, Asn-411, Asn-538, Asn-573, Asn-593, and Asn-652. Positions 174–234 (YAGENIYTHF…QTLTDDLLLI (61 aa)) are interaction with gL. The helical transmembrane segment at 672–692 (LVIIYVLIAIIALFGLYRLIR) threads the bilayer. The Intravirion segment spans residues 693-694 (LC).

It belongs to the herpesviridae glycoprotein H family. In terms of assembly, interacts with glycoprotein L (gL); this interaction is necessary for the correct processing and cell surface expression of gH. The heterodimer gH/gL seems to interact with gB trimers during fusion. Post-translationally, N-glycosylated, O-glycosylated, and sialylated.

The protein localises to the virion membrane. It is found in the host cell membrane. Its subcellular location is the host endosome membrane. In terms of biological role, the heterodimer glycoprotein H-glycoprotein L is required for the fusion of viral and plasma membranes leading to virus entry into the host cell. Following initial binding to host receptor, membrane fusion is mediated by the fusion machinery composed of gB and the heterodimer gH/gL. May also be involved in the fusion between the virion envelope and the outer nuclear membrane during virion morphogenesis. This Human herpesvirus 6B (strain Z29) (HHV-6 variant B) protein is Envelope glycoprotein H.